The primary structure comprises 186 residues: MVCYGVTIILVGTLGSLLVGAFPQVTPKKSCSLSKYQFPAPLELKAVWRMKEQFEDIMLLTNRKCNTRLFHRKWDIAELSVPDRITLVEAELDLTITVLTNPTTQRLAETCQQPLAFLTQVQEDLRDCLALEAPSHQPSGKLRHWLQKLKTAKKKETAGCLEASAILHIFQVLNDLRCAAQREDCT.

Positions 1-21 (MVCYGVTIILVGTLGSLLVGA) are cleaved as a signal peptide. 3 cysteine pairs are disulfide-bonded: C31–C128, C65–C160, and C178–C185.

Belongs to the lambda interferon family.

It localises to the secreted. Functionally, cytokine which plays a critical role in the antiviral host defense, predominantly in the epithelial tissues. Acts as a ligand for the heterodimeric class II cytokine receptor composed of IL10RB and IFNLR1, and receptor engagement leads to the activation of the JAK/STAT signaling pathway resulting in the expression of IFN-stimulated genes (ISG), which mediate the antiviral state. Has a restricted receptor distribution and therefore restricted targets: is primarily active in epithelial cells and this cell type-selective action is because of the epithelial cell-specific expression of its receptor IFNLR1. Exhibits antiviral activity against the H5N1 influenza A virus. Induces the expression of the antiviral MX protein in epithelial-rich tissues, such as intestine, trachea and lung. This chain is Interferon lambda-3 (IFNL3), found in Gallus gallus (Chicken).